The chain runs to 208 residues: Guanylate kinase (208 aa).

Residues 4–181 (GLLIVISGPS…AVEKIQSIIS (178 aa)) form the Guanylate kinase-like domain. 11–18 (GPSGTGKG) provides a ligand contact to ATP.

It belongs to the guanylate kinase family.

It localises to the cytoplasm. It catalyses the reaction GMP + ATP = GDP + ADP. Functionally, essential for recycling GMP and indirectly, cGMP. The sequence is that of Guanylate kinase from Clostridium tetani (strain Massachusetts / E88).